The following is a 117-amino-acid chain: Pre-mRNA-splicing factor ini1 (117 aa).

The protein belongs to the PHF5 family.

Its subcellular location is the nucleus. In terms of biological role, required for pre-mRNA splicing. The polypeptide is Pre-mRNA-splicing factor ini1 (ini1) (Schizosaccharomyces pombe (strain 972 / ATCC 24843) (Fission yeast)).